Consider the following 405-residue polypeptide: Alpha-N-acetylgalactosaminidase (405 aa).

Disulfide bonds link C21–C63, C25–C32, and C111–C142. Substrate is bound by residues 61 to 62 and K138; that span reads DD. D140 serves as the catalytic Nucleophile. The N-linked (GlcNAc...) asparagine glycan is linked to N161. Cysteines 171 and 193 form a disulfide. S172 contributes to the substrate binding site. An N-linked (GlcNAc...) asparagine glycan is attached at N185. Substrate-binding residues include R197 and D201. D201 functions as the Proton donor in the catalytic mechanism. A glycan (N-linked (GlcNAc...) asparagine) is linked at N369.

It belongs to the glycosyl hydrolase 27 family. Homodimer.

It is found in the lysosome. It catalyses the reaction Cleavage of non-reducing alpha-(1-&gt;3)-N-acetylgalactosamine residues from human blood group A and AB mucin glycoproteins, Forssman hapten and blood group A lacto series glycolipids.. It carries out the reaction a neolactoside IV(3)-alpha-GalNAc,IV(2)-alpha-Fuc-nLc4Cer(d18:1(4E)) + H2O = a neolactoside IV(2)-alpha-Fuc-nLc4Cer(d18:1(4E)) + N-acetyl-alpha-D-galactosamine. The enzyme catalyses a neolactoside IV(3)-alpha-GalNAc,IV(2)-alpha-Fuc-nLc4Cer(d18:0) + H2O = a neolactoside IV(2)-alpha-Fuc-nLc4Cer(d18:0) + N-acetyl-alpha-D-galactosamine. The catalysed reaction is a globoside IV3GalNAc-Gb4Cer + H2O = N-acetyl-alpha-D-galactosamine + a globoside Gb4Cer. Removes terminal alpha-N-acetylgalactosamine residues from glycolipids and glycopeptides. Required for the breakdown of glycolipids. The polypeptide is Alpha-N-acetylgalactosaminidase (NAGA) (Gallus gallus (Chicken)).